Here is a 201-residue protein sequence, read N- to C-terminus: Peptidyl-tRNA hydrolase (201 aa).

Position 14 (Tyr14) interacts with tRNA. His19 functions as the Proton acceptor in the catalytic mechanism. Residues Tyr64, Asn66, and Asn112 each contribute to the tRNA site.

This sequence belongs to the PTH family. In terms of assembly, monomer.

It is found in the cytoplasm. The catalysed reaction is an N-acyl-L-alpha-aminoacyl-tRNA + H2O = an N-acyl-L-amino acid + a tRNA + H(+). In terms of biological role, hydrolyzes ribosome-free peptidyl-tRNAs (with 1 or more amino acids incorporated), which drop off the ribosome during protein synthesis, or as a result of ribosome stalling. Its function is as follows. Catalyzes the release of premature peptidyl moieties from peptidyl-tRNA molecules trapped in stalled 50S ribosomal subunits, and thus maintains levels of free tRNAs and 50S ribosomes. In Afipia carboxidovorans (strain ATCC 49405 / DSM 1227 / KCTC 32145 / OM5) (Oligotropha carboxidovorans), this protein is Peptidyl-tRNA hydrolase.